We begin with the raw amino-acid sequence, 516 residues long: Probable cyclic di-GMP phosphodiesterase PdeB (516 aa).

Helical transmembrane passes span leucine 6–isoleucine 26 and glutamine 242–leucine 262. The 249-residue stretch at isoleucine 268 to leucine 516 folds into the EAL domain.

It localises to the cell inner membrane. The catalysed reaction is 3',3'-c-di-GMP + H2O = 5'-phosphoguanylyl(3'-&gt;5')guanosine + H(+). Phosphodiesterase (PDE) that catalyzes the hydrolysis of cyclic-di-GMP (c-di-GMP) to 5'-pGpG. In Escherichia coli (strain K12), this protein is Probable cyclic di-GMP phosphodiesterase PdeB.